A 415-amino-acid polypeptide reads, in one-letter code: Serine hydroxymethyltransferase (415 aa).

(6S)-5,6,7,8-tetrahydrofolate is bound by residues Leu-119 and 123-125 (GHL). The residue at position 228 (Lys-228) is an N6-(pyridoxal phosphate)lysine. 353–355 (SPF) is a binding site for (6S)-5,6,7,8-tetrahydrofolate.

It belongs to the SHMT family. In terms of assembly, homodimer. Pyridoxal 5'-phosphate serves as cofactor.

The protein resides in the cytoplasm. The catalysed reaction is (6R)-5,10-methylene-5,6,7,8-tetrahydrofolate + glycine + H2O = (6S)-5,6,7,8-tetrahydrofolate + L-serine. The protein operates within one-carbon metabolism; tetrahydrofolate interconversion. It functions in the pathway amino-acid biosynthesis; glycine biosynthesis; glycine from L-serine: step 1/1. In terms of biological role, catalyzes the reversible interconversion of serine and glycine with tetrahydrofolate (THF) serving as the one-carbon carrier. Also exhibits THF-independent aldolase activity toward beta-hydroxyamino acids, producing glycine and aldehydes, via a retro-aldol mechanism. This chain is Serine hydroxymethyltransferase, found in Halorubrum lacusprofundi (strain ATCC 49239 / DSM 5036 / JCM 8891 / ACAM 34).